Here is a 186-residue protein sequence, read N- to C-terminus: Acireductone dioxygenase (186 aa).

Positions 96, 98, 102, and 140 each coordinate Fe(2+). Histidine 96, histidine 98, glutamate 102, and histidine 140 together coordinate Ni(2+).

This sequence belongs to the acireductone dioxygenase (ARD) family. Monomer. Fe(2+) is required as a cofactor. Ni(2+) serves as cofactor.

The enzyme catalyses 1,2-dihydroxy-5-(methylsulfanyl)pent-1-en-3-one + O2 = 3-(methylsulfanyl)propanoate + CO + formate + 2 H(+). It carries out the reaction 1,2-dihydroxy-5-(methylsulfanyl)pent-1-en-3-one + O2 = 4-methylsulfanyl-2-oxobutanoate + formate + 2 H(+). It participates in amino-acid biosynthesis; L-methionine biosynthesis via salvage pathway; L-methionine from S-methyl-5-thio-alpha-D-ribose 1-phosphate: step 5/6. In terms of biological role, catalyzes 2 different reactions between oxygen and the acireductone 1,2-dihydroxy-3-keto-5-methylthiopentene (DHK-MTPene) depending upon the metal bound in the active site. Fe-containing acireductone dioxygenase (Fe-ARD) produces formate and 2-keto-4-methylthiobutyrate (KMTB), the alpha-ketoacid precursor of methionine in the methionine recycle pathway. Ni-containing acireductone dioxygenase (Ni-ARD) produces methylthiopropionate, carbon monoxide and formate, and does not lie on the methionine recycle pathway. The chain is Acireductone dioxygenase from Methylococcus capsulatus (strain ATCC 33009 / NCIMB 11132 / Bath).